Here is a 135-residue protein sequence, read N- to C-terminus: Transcription antitermination protein NusB (135 aa).

The protein belongs to the NusB family.

Its function is as follows. Involved in transcription antitermination. Required for transcription of ribosomal RNA (rRNA) genes. Binds specifically to the boxA antiterminator sequence of the ribosomal RNA (rrn) operons. The protein is Transcription antitermination protein NusB of Wolinella succinogenes (strain ATCC 29543 / DSM 1740 / CCUG 13145 / JCM 31913 / LMG 7466 / NCTC 11488 / FDC 602W) (Vibrio succinogenes).